The following is a 178-amino-acid chain: Nicotinamide-nucleotide adenylyltransferase (178 aa).

This sequence belongs to the archaeal NMN adenylyltransferase family.

The protein localises to the cytoplasm. It carries out the reaction beta-nicotinamide D-ribonucleotide + ATP + H(+) = diphosphate + NAD(+). Its pathway is cofactor biosynthesis; NAD(+) biosynthesis; NAD(+) from nicotinamide D-ribonucleotide: step 1/1. The sequence is that of Nicotinamide-nucleotide adenylyltransferase from Pyrobaculum neutrophilum (strain DSM 2338 / JCM 9278 / NBRC 100436 / V24Sta) (Thermoproteus neutrophilus).